The chain runs to 195 residues: Peptide deformylase (195 aa).

The Fe cation site is built by Cys-102 and His-144. The active site involves Glu-145. Residue His-148 participates in Fe cation binding.

The protein belongs to the polypeptide deformylase family. Requires Fe(2+) as cofactor.

The catalysed reaction is N-terminal N-formyl-L-methionyl-[peptide] + H2O = N-terminal L-methionyl-[peptide] + formate. Functionally, removes the formyl group from the N-terminal Met of newly synthesized proteins. Requires at least a dipeptide for an efficient rate of reaction. N-terminal L-methionine is a prerequisite for activity but the enzyme has broad specificity at other positions. This is Peptide deformylase from Salinibacter ruber (strain DSM 13855 / M31).